The following is a 331-amino-acid chain: Glucan endo-1,3-beta-glucosidase, acidic isoform GL161 (331 aa).

The signal sequence occupies residues 1 to 9; that stretch reads MCSIQIIGA. Gln-10 carries the post-translational modification Pyrrolidone carboxylic acid. Residues Asn-55 and Asn-75 are each glycosylated (N-linked (GlcNAc...) asparagine). The Nucleophile role is filled by Glu-244.

Belongs to the glycosyl hydrolase 17 family. Is expressed primarily in epidermal cell of healthy plant, and following induction by ethylene, accumulates in mesophyll cells.

Its subcellular location is the secreted. It localises to the extracellular space. It carries out the reaction Hydrolysis of (1-&gt;3)-beta-D-glucosidic linkages in (1-&gt;3)-beta-D-glucans.. Its function is as follows. Is thought to be an important plant defense-related product against fungal pathogens. The polypeptide is Glucan endo-1,3-beta-glucosidase, acidic isoform GL161 (Nicotiana tabacum (Common tobacco)).